The following is a 278-amino-acid chain: Orotidine 5'-phosphate decarboxylase (278 aa).

Lys-95 serves as the catalytic Proton donor.

This sequence belongs to the OMP decarboxylase family. Type 2 subfamily.

It carries out the reaction orotidine 5'-phosphate + H(+) = UMP + CO2. It participates in pyrimidine metabolism; UMP biosynthesis via de novo pathway; UMP from orotate: step 2/2. The chain is Orotidine 5'-phosphate decarboxylase from Mycobacterium ulcerans (strain Agy99).